The primary structure comprises 213 residues: Guanylate kinase (213 aa).

One can recognise a Guanylate kinase-like domain in the interval Gly-6–Ser-186. Ser-13–Ser-20 contacts ATP.

Belongs to the guanylate kinase family.

It localises to the cytoplasm. It catalyses the reaction GMP + ATP = GDP + ADP. Its function is as follows. Essential for recycling GMP and indirectly, cGMP. The polypeptide is Guanylate kinase (Ruegeria pomeroyi (strain ATCC 700808 / DSM 15171 / DSS-3) (Silicibacter pomeroyi)).